The chain runs to 280 residues: ATP synthase subunit a (280 aa).

The next 7 helical transmembrane spans lie at 45–65 (AINVDSMLFSIGLGVLFLFLF), 105–125 (LVAPLALTVFMWVFLMNLMDL), 126–146 (LPVDWLPYVATMAGIPYLKVV), 159–179 (LSIFFLVLYYSVKMKGAGGFF), 190–210 (FLFPVNLLLEGVGLIAKPISL), 223–243 (MIFILIALMFGGGWVLALFGG), and 250–270 (AVFHILIITLQAFIFMTLTIV).

The protein belongs to the ATPase A chain family. F-type ATPases have 2 components, CF(1) - the catalytic core - and CF(0) - the membrane proton channel. CF(1) has five subunits: alpha(3), beta(3), gamma(1), delta(1), epsilon(1). CF(0) has three main subunits: a(1), b(2) and c(9-12). The alpha and beta chains form an alternating ring which encloses part of the gamma chain. CF(1) is attached to CF(0) by a central stalk formed by the gamma and epsilon chains, while a peripheral stalk is formed by the delta and b chains.

It is found in the cell inner membrane. Its function is as follows. Key component of the proton channel; it plays a direct role in the translocation of protons across the membrane. This chain is ATP synthase subunit a, found in Thiobacillus denitrificans (strain ATCC 25259 / T1).